We begin with the raw amino-acid sequence, 227 residues long: uncharacterized protein (227 aa).

The next 7 membrane-spanning stretches (helical) occupy residues 25–45, 49–69, 80–100, 111–131, 144–164, 165–185, and 201–221; these read LLGF…NAGF, AAFG…YGMI, TGVT…GPVL, KIVG…SALA, FLTV…FLGI, PALA…MIMW, and AALT…NILL.

It is found in the cell membrane. This is an uncharacterized protein from Neisseria meningitidis serogroup B (strain ATCC BAA-335 / MC58).